The sequence spans 392 residues: Formate-dependent phosphoribosylglycinamide formyltransferase (392 aa).

Residues Glu20 to Leu21 and Glu80 contribute to the N(1)-(5-phospho-beta-D-ribosyl)glycinamide site. Residues Arg112, Lys153, Ser158–Gln163, Glu193–Val196, and Glu201 each bind ATP. The ATP-grasp domain maps to Arg117–Leu306. Residues Glu265 and Glu277 each coordinate Mg(2+). Residues Asp284, Lys355, and Arg362–Arg363 contribute to the N(1)-(5-phospho-beta-D-ribosyl)glycinamide site.

It belongs to the PurK/PurT family. In terms of assembly, homodimer.

The catalysed reaction is N(1)-(5-phospho-beta-D-ribosyl)glycinamide + formate + ATP = N(2)-formyl-N(1)-(5-phospho-beta-D-ribosyl)glycinamide + ADP + phosphate + H(+). Its pathway is purine metabolism; IMP biosynthesis via de novo pathway; N(2)-formyl-N(1)-(5-phospho-D-ribosyl)glycinamide from N(1)-(5-phospho-D-ribosyl)glycinamide (formate route): step 1/1. Functionally, involved in the de novo purine biosynthesis. Catalyzes the transfer of formate to 5-phospho-ribosyl-glycinamide (GAR), producing 5-phospho-ribosyl-N-formylglycinamide (FGAR). Formate is provided by PurU via hydrolysis of 10-formyl-tetrahydrofolate. The polypeptide is Formate-dependent phosphoribosylglycinamide formyltransferase (Aeromonas salmonicida (strain A449)).